A 278-amino-acid polypeptide reads, in one-letter code: Chitosanase (278 aa).

Positions 1 to 40 are cleaved as a signal peptide; it reads MHSQHRTARIALAVVLTAIPASLATAGVGYASTQASTAVK. E62 serves as the catalytic Proton donor. Catalysis depends on D80, which acts as the Nucleophile.

The protein belongs to the glycosyl hydrolase 46 family.

It localises to the secreted. The enzyme catalyses Endohydrolysis of beta-(1-&gt;4)-linkages between D-glucosamine residues in a partly acetylated chitosan.. Its function is as follows. Aids in the defense against invading fungal pathogens by degrading their cell wall chitosan. This chain is Chitosanase (csn), found in Streptomyces sp. (strain N174).